The primary structure comprises 646 residues: Elongation factor 4 (646 aa).

The 186-residue stretch at 42-227 folds into the tr-type G domain; the sequence is AQIRNFCIIA…EVVRRVPHPQ (186 aa). GTP-binding positions include 54–59 and 174–177; these read DHGKST and NKID.

The protein belongs to the TRAFAC class translation factor GTPase superfamily. Classic translation factor GTPase family. LepA subfamily.

It localises to the cell membrane. The enzyme catalyses GTP + H2O = GDP + phosphate + H(+). Functionally, required for accurate and efficient protein synthesis under certain stress conditions. May act as a fidelity factor of the translation reaction, by catalyzing a one-codon backward translocation of tRNAs on improperly translocated ribosomes. Back-translocation proceeds from a post-translocation (POST) complex to a pre-translocation (PRE) complex, thus giving elongation factor G a second chance to translocate the tRNAs correctly. Binds to ribosomes in a GTP-dependent manner. This chain is Elongation factor 4, found in Mycobacterium leprae (strain Br4923).